Here is a 326-residue protein sequence, read N- to C-terminus: Olfactory receptor 11H2 (326 aa).

Residues 1 to 44 (MCPLTLHVTGLMNVSEPNSSFAFVNEFILQGFSCEWTIQIFLFS) lie on the Extracellular side of the membrane. Asn-13 and Asn-18 each carry an N-linked (GlcNAc...) asparagine glycan. Residues 45–65 (LFTTIYALTITGNGAIAFVLW) traverse the membrane as a helical segment. The Cytoplasmic portion of the chain corresponds to 66–72 (CDRRLHT). A helical transmembrane segment spans residues 73–93 (PMYMFLGNFSFLEIWYVSSTV). The Extracellular portion of the chain corresponds to 94 to 112 (PKMLVNFLSEKKNISFAGC). A glycan (N-linked (GlcNAc...) asparagine) is linked at Asn-106. The cysteines at positions 112 and 194 are disulfide-linked. Residues 113–133 (FLQFYFFFSLGTSECLLLTVM) traverse the membrane as a helical segment. The Cytoplasmic segment spans residues 134–158 (AFDQYLAICRPLLYPNIMTGHLYAK). Residues 159–179 (LVILCWVCGFLWFLIPIVLIS) traverse the membrane as a helical segment. The Extracellular segment spans residues 180–216 (QKPFCGPNIIDHVVCDPGPLFALDCVSAPRIQLFCYT). Residues 217–237 (LSSLVIFGNFLFIIGSYTLVL) form a helical membrane-spanning segment. The Cytoplasmic portion of the chain corresponds to 238–259 (KAVLGMPSSTGRHKAFSTCGSH). The helical transmembrane segment at 260-280 (LAVVSLCYSPLMVMYVSPGLG) threads the bilayer. At 281–287 (HSTGMQK) the chain is on the extracellular side. A helical membrane pass occupies residues 288-308 (IETLFYAMVTPLFNPLIYSLQ). The Cytoplasmic segment spans residues 309–326 (NKEIKAALRKVLGSSNII).

The protein belongs to the G-protein coupled receptor 1 family.

The protein resides in the cell membrane. Functionally, odorant receptor. The sequence is that of Olfactory receptor 11H2 (OR11H2) from Homo sapiens (Human).